Here is a 287-residue protein sequence, read N- to C-terminus: ATP synthase gamma chain (287 aa).

The protein belongs to the ATPase gamma chain family. In terms of assembly, F-type ATPases have 2 components, CF(1) - the catalytic core - and CF(0) - the membrane proton channel. CF(1) has five subunits: alpha(3), beta(3), gamma(1), delta(1), epsilon(1). CF(0) has three main subunits: a, b and c.

The protein resides in the cell inner membrane. Produces ATP from ADP in the presence of a proton gradient across the membrane. The gamma chain is believed to be important in regulating ATPase activity and the flow of protons through the CF(0) complex. The protein is ATP synthase gamma chain of Xanthomonas oryzae pv. oryzae (strain MAFF 311018).